We begin with the raw amino-acid sequence, 121 residues long: Protein yippee-like 5 (121 aa).

A Yippee domain is found at 13–110 (RLFSCANCDT…LERALVRESE (98 aa)). Zn(2+) contacts are provided by cysteine 17, cysteine 20, cysteine 73, and cysteine 76. Serine 118 is subject to Phosphoserine.

Belongs to the yippee family. As to quaternary structure, identified in the CTLH complex that contains GID4, RANBP9 and/or RANBP10, MKLN1, MAEA, RMND5A (or alternatively its paralog RMND5B), GID8, ARMC8, WDR26 and YPEL5. Within this complex, MAEA, RMND5A (or alternatively its paralog RMND5B), GID8, WDR26, and RANBP9 and/or RANBP10 form the catalytic core, while GID4, MKLN1, ARMC8 and YPEL5 have ancillary roles. Interacts with RANBP9 and RANBP10.

The protein resides in the nucleus. The protein localises to the cytoplasm. Its subcellular location is the cytoskeleton. It localises to the microtubule organizing center. It is found in the centrosome. The protein resides in the spindle pole. The protein localises to the midbody. Its function is as follows. Component of the CTLH E3 ubiquitin-protein ligase complex that selectively accepts ubiquitin from UBE2H and mediates ubiquitination and subsequent proteasomal degradation of the transcription factor HBP1. Required for normal cell proliferation. The polypeptide is Protein yippee-like 5 (YPEL5) (Bos taurus (Bovine)).